Reading from the N-terminus, the 62-residue chain is Protein YmcF (62 aa).

This sequence belongs to the YmcF/YnqF peptide family.

The protein is Protein YmcF of Escherichia coli (strain K12).